The chain runs to 148 residues: Snaclec 6 (148 aa).

A signal peptide spans M1–A23. 3 disulfide bridges follow: C27-C38, C55-C144, and C121-C136. The C-type lectin domain maps to Y34–K145. N130 carries N-linked (GlcNAc...) asparagine glycosylation.

This sequence belongs to the snaclec family. As to quaternary structure, heterodimer; disulfide-linked. In terms of tissue distribution, expressed by the venom gland.

The protein resides in the secreted. Its function is as follows. Interferes with one step of hemostasis (modulation of platelet aggregation, or coagulation cascade, for example). This is Snaclec 6 from Bitis arietans (African puff adder).